A 263-amino-acid chain; its full sequence is Hydroxyethylthiazole kinase (263 aa).

Methionine 39 contributes to the substrate binding site. ATP-binding residues include lysine 115 and threonine 160. Residue glycine 187 coordinates substrate.

This sequence belongs to the Thz kinase family. Mg(2+) is required as a cofactor.

It catalyses the reaction 5-(2-hydroxyethyl)-4-methylthiazole + ATP = 4-methyl-5-(2-phosphooxyethyl)-thiazole + ADP + H(+). It functions in the pathway cofactor biosynthesis; thiamine diphosphate biosynthesis; 4-methyl-5-(2-phosphoethyl)-thiazole from 5-(2-hydroxyethyl)-4-methylthiazole: step 1/1. In terms of biological role, catalyzes the phosphorylation of the hydroxyl group of 4-methyl-5-beta-hydroxyethylthiazole (THZ). The chain is Hydroxyethylthiazole kinase from Staphylococcus saprophyticus subsp. saprophyticus (strain ATCC 15305 / DSM 20229 / NCIMB 8711 / NCTC 7292 / S-41).